A 573-amino-acid chain; its full sequence is Septation ring formation regulator EzrA (573 aa).

The Extracellular portion of the chain corresponds to 1 to 2 (MQ). A helical transmembrane segment spans residues 3 to 21 (VAIGIVVVAIVIYAAVKGF). Residues 22-573 (QFYIDKQVRQ…KQADKMNDEA (552 aa)) are Cytoplasmic-facing. Coiled-coil stretches lie at residues 100–188 (DAQQ…LAKA), 317–364 (LTHA…VYQA), and 416–488 (ETLQ…TLKE).

It belongs to the EzrA family.

The protein localises to the cell membrane. Negative regulator of FtsZ ring formation; modulates the frequency and position of FtsZ ring formation. Inhibits FtsZ ring formation at polar sites. Interacts either with FtsZ or with one of its binding partners to promote depolymerization. The protein is Septation ring formation regulator EzrA of Lactiplantibacillus plantarum (strain ATCC BAA-793 / NCIMB 8826 / WCFS1) (Lactobacillus plantarum).